Reading from the N-terminus, the 83-residue chain is Exodeoxyribonuclease 7 small subunit (83 aa).

Belongs to the XseB family. In terms of assembly, heterooligomer composed of large and small subunits.

The protein localises to the cytoplasm. It catalyses the reaction Exonucleolytic cleavage in either 5'- to 3'- or 3'- to 5'-direction to yield nucleoside 5'-phosphates.. Its function is as follows. Bidirectionally degrades single-stranded DNA into large acid-insoluble oligonucleotides, which are then degraded further into small acid-soluble oligonucleotides. The polypeptide is Exodeoxyribonuclease 7 small subunit (Rhodopseudomonas palustris (strain HaA2)).